The chain runs to 90 residues: Putative beta-neurotoxin RjAa14F (90 aa).

The N-terminal stretch at 1–18 (MKILIFIIASFMLIGVEC) is a signal peptide. Residues 19–89 (KEGYPTNSEG…VWDPNNNKCV (71 aa)) form the LCN-type CS-alpha/beta domain. Disulfide bonds link Cys29/Cys88, Cys33/Cys62, Cys40/Cys69, and Cys44/Cys71.

It belongs to the long (4 C-C) scorpion toxin superfamily. Sodium channel inhibitor family. Beta subfamily. Expressed by the venom gland.

It localises to the secreted. Functionally, beta toxins bind voltage-independently at site-4 of sodium channels (Nav) and shift the voltage of activation toward more negative potentials thereby affecting sodium channel activation and promoting spontaneous and repetitive firing. The chain is Putative beta-neurotoxin RjAa14F from Rhopalurus junceus (Caribbean blue scorpion).